The sequence spans 291 residues: Pyridoxal 5'-phosphate synthase subunit PdxS (291 aa).

A D-ribose 5-phosphate-binding site is contributed by aspartate 23. Catalysis depends on lysine 80, which acts as the Schiff-base intermediate with D-ribose 5-phosphate. Residue glycine 152 coordinates D-ribose 5-phosphate. Arginine 164 is a binding site for D-glyceraldehyde 3-phosphate. D-ribose 5-phosphate is bound by residues glycine 213 and glycine 234–serine 235.

This sequence belongs to the PdxS/SNZ family. As to quaternary structure, in the presence of PdxT, forms a dodecamer of heterodimers.

The catalysed reaction is aldehydo-D-ribose 5-phosphate + D-glyceraldehyde 3-phosphate + L-glutamine = pyridoxal 5'-phosphate + L-glutamate + phosphate + 3 H2O + H(+). It participates in cofactor biosynthesis; pyridoxal 5'-phosphate biosynthesis. In terms of biological role, catalyzes the formation of pyridoxal 5'-phosphate from ribose 5-phosphate (RBP), glyceraldehyde 3-phosphate (G3P) and ammonia. The ammonia is provided by the PdxT subunit. Can also use ribulose 5-phosphate and dihydroxyacetone phosphate as substrates, resulting from enzyme-catalyzed isomerization of RBP and G3P, respectively. The protein is Pyridoxal 5'-phosphate synthase subunit PdxS of Bifidobacterium adolescentis (strain ATCC 15703 / DSM 20083 / NCTC 11814 / E194a).